We begin with the raw amino-acid sequence, 509 residues long: Maturase K (509 aa).

The protein belongs to the intron maturase 2 family. MatK subfamily.

It is found in the plastid. It localises to the chloroplast. Functionally, usually encoded in the trnK tRNA gene intron. Probably assists in splicing its own and other chloroplast group II introns. In Clematis lasiantha (Pipestem clematis), this protein is Maturase K.